An 806-amino-acid chain; its full sequence is WEB family protein At3g02930, chloroplastic (806 aa).

The transit peptide at 1 to 78 directs the protein to the chloroplast; the sequence is MASKIKNGLS…PTPPEKTQIR (78 aa). Disordered stretches follow at residues 1–94 and 380–403; these read MASK…QIKE and KSEQKLGIAEEESSKSEKEAEKLK. The span at 9-22 shows a compositional bias: low complexity; it reads LSDTTLRKSSSTSL. Polar residues predominate over residues 34-59; the sequence is PDSNSPSPTQQQSRLSFERPSSNSKP. Coiled-coil stretches lie at residues 88 to 530, 585 to 662, and 698 to 757; these read QSVQ…FESA, DCLK…IEEN, and ETLD…EDLN. Residues 391-403 show a composition bias toward basic and acidic residues; sequence ESSKSEKEAEKLK. 2 disordered regions span residues 684-725 and 746-777; these read ENGY…EDET and KESAKEEEEDLNVVDQSQKTSPVNGLTGEDEL. Composition is skewed to basic and acidic residues over residues 685 to 699 and 706 to 725; these read NGYRSAEEKSSKVET and KLEEDTEKKEKKERSPEDET. A compositionally biased stretch (polar residues) spans 759-769; sequence VDQSQKTSPVN.

The protein belongs to the WEB family.

It localises to the plastid. Its subcellular location is the chloroplast. This is WEB family protein At3g02930, chloroplastic from Arabidopsis thaliana (Mouse-ear cress).